Reading from the N-terminus, the 95-residue chain is Aspartyl/glutamyl-tRNA(Asn/Gln) amidotransferase subunit C (95 aa).

It belongs to the GatC family. In terms of assembly, heterotrimer of A, B and C subunits.

The catalysed reaction is L-glutamyl-tRNA(Gln) + L-glutamine + ATP + H2O = L-glutaminyl-tRNA(Gln) + L-glutamate + ADP + phosphate + H(+). The enzyme catalyses L-aspartyl-tRNA(Asn) + L-glutamine + ATP + H2O = L-asparaginyl-tRNA(Asn) + L-glutamate + ADP + phosphate + 2 H(+). In terms of biological role, allows the formation of correctly charged Asn-tRNA(Asn) or Gln-tRNA(Gln) through the transamidation of misacylated Asp-tRNA(Asn) or Glu-tRNA(Gln) in organisms which lack either or both of asparaginyl-tRNA or glutaminyl-tRNA synthetases. The reaction takes place in the presence of glutamine and ATP through an activated phospho-Asp-tRNA(Asn) or phospho-Glu-tRNA(Gln). This chain is Aspartyl/glutamyl-tRNA(Asn/Gln) amidotransferase subunit C, found in Pelodictyon phaeoclathratiforme (strain DSM 5477 / BU-1).